The sequence spans 130 residues: Arginine decarboxylase proenzyme (130 aa).

Serine 78 serves as the catalytic Schiff-base intermediate with substrate; via pyruvic acid. Serine 78 carries the pyruvic acid (Ser); by autocatalysis modification. Histidine 83 serves as the catalytic Proton acceptor; for processing activity. The active-site Proton donor; for catalytic activity is the cysteine 98.

It belongs to the prokaryotic AdoMetDC family. Type 1 subfamily. In terms of assembly, heterooctamer of four alpha and four beta chains arranged as a tetramer of alpha/beta heterodimers. It depends on pyruvate as a cofactor. In terms of processing, is synthesized initially as an inactive proenzyme. Formation of the active enzyme involves a self-maturation process in which the active site pyruvoyl group is generated from an internal serine residue via an autocatalytic post-translational modification. Two non-identical subunits are generated from the proenzyme in this reaction, and the pyruvate is formed at the N-terminus of the alpha chain, which is derived from the carboxyl end of the proenzyme. The post-translation cleavage follows an unusual pathway, termed non-hydrolytic serinolysis, in which the side chain hydroxyl group of the serine supplies its oxygen atom to form the C-terminus of the beta chain, while the remainder of the serine residue undergoes an oxidative deamination to produce ammonia and the pyruvoyl group blocking the N-terminus of the alpha chain.

It carries out the reaction L-arginine + H(+) = agmatine + CO2. It functions in the pathway amine and polyamine biosynthesis; agmatine biosynthesis; agmatine from L-arginine: step 1/1. In terms of biological role, specifically catalyzes the decarboxylation of L-arginine to agmatine. Has no S-adenosylmethionine decarboxylase (AdoMetDC) activity. The sequence is that of Arginine decarboxylase proenzyme from Sulfolobus acidocaldarius (strain ATCC 33909 / DSM 639 / JCM 8929 / NBRC 15157 / NCIMB 11770).